Reading from the N-terminus, the 142-residue chain is Large ribosomal subunit protein uL13 (142 aa).

This sequence belongs to the universal ribosomal protein uL13 family. As to quaternary structure, part of the 50S ribosomal subunit.

In terms of biological role, this protein is one of the early assembly proteins of the 50S ribosomal subunit, although it is not seen to bind rRNA by itself. It is important during the early stages of 50S assembly. This chain is Large ribosomal subunit protein uL13, found in Koribacter versatilis (strain Ellin345).